Here is a 352-residue protein sequence, read N- to C-terminus: C-C chemokine receptor type 5 (352 aa).

Residues 1 to 30 are Extracellular-facing; the sequence is MDYQVSSPTYDIDYYTSEPCQKINVKQIAA. Sulfotyrosine is present on tyrosine 3. O-linked (GalNAc...) serine glycans are attached at residues serine 6 and serine 7. Residues tyrosine 10, tyrosine 14, and tyrosine 15 each carry the sulfotyrosine modification. 2 disulfide bridges follow: cysteine 20–cysteine 269 and cysteine 101–cysteine 178. The chain crosses the membrane as a helical span at residues 31-58; it reads RLLPPLYSLVFIFGFVGNILVVLILINC. Topologically, residues 59–68 are cytoplasmic; sequence KRLKSMTDIY. Residues 69–89 form a helical membrane-spanning segment; the sequence is LLNLAISDLLFLLTVPFWAHY. Over 90–102 the chain is Extracellular; the sequence is AAAQWDFGNTMCQ. Residues 103 to 124 form a helical membrane-spanning segment; it reads LLTGLYFIGFFSGIFFIILLTI. Residues 125-141 lie on the Cytoplasmic side of the membrane; sequence DRYLAIVHAVFALKART. Residues 142–166 traverse the membrane as a helical segment; it reads VTFGVVTSVITWVVAVFASLPGIIF. The Extracellular portion of the chain corresponds to 167–198; the sequence is TRSQREGLHYTCSSHFPYSQYQFWKNFQTLKM. Residues 199 to 218 traverse the membrane as a helical segment; it reads VILGLVLPLLVMVICYSGIL. Residues 219–235 are Cytoplasmic-facing; sequence KTLLRCRNEKKRHRAVR. The chain crosses the membrane as a helical span at residues 236 to 260; it reads LIFTIMIVYFLFWAPYNIVLLLNTF. Topologically, residues 261 to 277 are extracellular; that stretch reads QEFFGLNNCSSSNRLDQ. Residues 278–301 traverse the membrane as a helical segment; sequence AMQVTETLGMTHCCINPIIYAFVG. The Cytoplasmic portion of the chain corresponds to 302-352; that stretch reads EKFRNYLLVFFQKHIAKRFCKCCSIFQQEAPERASSVYTRSTAEQEISVGL. Residues cysteine 321, cysteine 323, and cysteine 324 are each lipidated (S-palmitoyl cysteine). 4 positions are modified to phosphoserine; by BARK1: serine 336, serine 337, serine 342, and serine 349.

This sequence belongs to the G-protein coupled receptor 1 family. As to quaternary structure, interacts with PRAF2. Efficient ligand binding to CCL3/MIP-1alpha and CCL4/MIP-1beta requires sulfation, O-glycosylation and sialic acid modifications. Glycosylation on Ser-6 is required for efficient binding of CCL4. Interacts with GRK2. Interacts with ARRB1 and ARRB2. Interacts with CNIH4. Interacts with S100A4; this interaction stimulates T-lymphocyte chemotaxis. In terms of processing, sulfated on at least 2 of the N-terminal tyrosines. Sulfation is required for efficient binding of the chemokines, CCL3 and CCL4. Palmitoylation in the C-terminal is important for cell surface expression. Post-translationally, phosphorylation on serine residues in the C-terminal is stimulated by binding CC chemokines especially by APO-RANTES. In terms of processing, O-glycosylated, but not N-glycosylated. Ser-6 appears to be the major site even if Ser-7 may be also O-glycosylated. Also sialylated glycans present which contribute to chemokine binding. Thr-16 and Ser-17 may also be glycosylated and, if so, with small moieties such as a T-antigen.

It localises to the cell membrane. In terms of biological role, receptor for a number of inflammatory CC-chemokines including CCL3/MIP-1-alpha, CCL4/MIP-1-beta and RANTES and subsequently transduces a signal by increasing the intracellular calcium ion level. May play a role in the control of granulocytic lineage proliferation or differentiation. Participates in T-lymphocyte migration to the infection site by acting as a chemotactic receptor. The sequence is that of C-C chemokine receptor type 5 (CCR5) from Macaca arctoides (Stump-tailed macaque).